We begin with the raw amino-acid sequence, 379 residues long: Fructose-1,6-bisphosphate aldolase/phosphatase (379 aa).

Catalysis depends on Asp-13, which acts as the Proton acceptor; for FBP phosphatase activity. Mg(2+) contacts are provided by Asp-13, His-20, Asp-51, and Asp-52. His-20 is a beta-D-fructose 1,6-bisphosphate binding site. His-20 provides a ligand contact to dihydroxyacetone phosphate. Tyr-89 contacts beta-D-fructose 1,6-bisphosphate. Gln-93 is a binding site for Mg(2+). 102-103 provides a ligand contact to beta-D-fructose 1,6-bisphosphate; sequence GN. A Mg(2+)-binding site is contributed by Asp-130. Beta-D-fructose 1,6-bisphosphate is bound at residue Lys-131. Lys-131 serves as a coordination point for dihydroxyacetone phosphate. Tyr-227 functions as the Proton donor/acceptor; for FBP aldolase activity in the catalytic mechanism. Residues Lys-230, Asp-231, and Asp-232 each contribute to the Mg(2+) site. Lys-230 acts as the Schiff-base intermediate with DHAP; for FBP aldolase activity in catalysis. Residues 240–241, Arg-264, Asp-285, and Tyr-346 each bind beta-D-fructose 1,6-bisphosphate; that span reads QS. 2 residues coordinate dihydroxyacetone phosphate: Arg-264 and Asp-285.

It belongs to the FBP aldolase/phosphatase family. As to quaternary structure, homooctamer; dimer of tetramers. Mg(2+) is required as a cofactor.

It catalyses the reaction beta-D-fructose 1,6-bisphosphate + H2O = beta-D-fructose 6-phosphate + phosphate. It carries out the reaction beta-D-fructose 1,6-bisphosphate = D-glyceraldehyde 3-phosphate + dihydroxyacetone phosphate. The protein operates within carbohydrate biosynthesis; gluconeogenesis. Its function is as follows. Catalyzes two subsequent steps in gluconeogenesis: the aldol condensation of dihydroxyacetone phosphate (DHAP) and glyceraldehyde-3-phosphate (GA3P) to fructose-1,6-bisphosphate (FBP), and the dephosphorylation of FBP to fructose-6-phosphate (F6P). This is Fructose-1,6-bisphosphate aldolase/phosphatase from Moorella thermoacetica (strain ATCC 39073 / JCM 9320).